Here is a 340-residue protein sequence, read N- to C-terminus: Photosystem II assembly lipoprotein Ycf48 (340 aa).

An N-terminal signal peptide occupies residues 1–26 (MTSVLGLLKPLKKAIAAIAVLVLCIG). A lipid anchor (N-palmitoyl cysteine) is attached at C27. The S-diacylglycerol cysteine moiety is linked to residue C27.

This sequence belongs to the Ycf48 family. As to quaternary structure, part of early PSII assembly complexes which includes D1 (psbA) and PsbI; not found in mature PSII. Binds to the lumenal side of PSII complexes. Interacts with YidC.

It is found in the cellular thylakoid membrane. Functionally, a factor required for optimal assembly of photosystem II (PSII), acting in the early stages of PSII assembly. Also plays a role in replacement of photodamaged D1 (psbA). Assists YidC in synthesis of chlorophyll-binding proteins. This Picosynechococcus sp. (strain ATCC 27264 / PCC 7002 / PR-6) (Agmenellum quadruplicatum) protein is Photosystem II assembly lipoprotein Ycf48.